The following is a 519-amino-acid chain: Na(+)/H(+) exchange regulatory cofactor NHE-RF3 (519 aa).

PDZ domains follow at residues 9–90, 134–215, and 243–323; these read ECKL…LDGD, RLCY…VDKE, and IVEM…VDKE. Ser148, Ser192, Ser250, Ser334, and Ser348 each carry phosphoserine. Residues 347 to 374 form a disordered region; the sequence is GSVKEAPAPTPTSLEVSSPPDTTEEVDH. The span at 357–367 shows a compositional bias: polar residues; the sequence is PTSLEVSSPPD. The PDZ 4 domain occupies 378–458; the sequence is LCRLAKGENG…NVTLLVCGKK (81 aa). Phosphothreonine is present on Thr451. A disordered region spans residues 473 to 519; the sequence is SLADPPDTPPDSKEGIVVESKHDSHMAKERAHSTASHSSSNSEDTEM. Residues 482-504 are compositionally biased toward basic and acidic residues; that stretch reads PDSKEGIVVESKHDSHMAKERAH. Phosphoserine is present on residues Ser492, Ser508, Ser510, Ser511, Ser512, and Ser514. Over residues 505–519 the composition is skewed to low complexity; it reads STASHSSSNSEDTEM.

The protein belongs to the NHER family. As to quaternary structure, interacts with PDZK1IP1 and ABCC2. Binds to the C-terminal region of SLC26A3. Interacts (via PDZ domains 1 and 3) with SCARB1 (C-terminal domain). Forms a heterodimeric complex with NHERF1. Interacts with AKAP2, BCR, CFTR, SLCO1A1, SLC22A12, SLC22A4, SLC22A5, NHERF2 and SLC17A1. Component of a complex, composed of PDZK1, SYNGAP1, KLHL17 and NMDA receptors. Interacts (via PDZ1 domain) directly with KLHL17; the interaction is important for integrity of actin cytoskeleton structures in neurons. Interacts (via C-terminal PDZ domain) with SLC26A6 (via C-terminal domain). Interacts (via C-terminal PDZ domain) with SLC9A3 (via C-terminal domain). Interacts (via the first PDZ domain) with PTGIR (via non-isoprenylated C-terminus). Interacts (via PDZ domains 1 and 3) with SLC5A8 (via PDZ-binding motif); interaction increases nicotinate transport activity of SLC5A8.

The protein localises to the membrane. The protein resides in the cell membrane. Its function is as follows. A scaffold protein that connects plasma membrane proteins and regulatory components, regulating their surface expression in epithelial cells apical domains. May be involved in the coordination of a diverse range of regulatory processes for ion transport and second messenger cascades. In complex with NHERF1, may cluster proteins that are functionally dependent in a mutual fashion and modulate the trafficking and the activity of the associated membrane proteins. May play a role in the cellular mechanisms associated with multidrug resistance through its interaction with ABCC2 and PDZK1IP1. May potentiate the CFTR chloride channel activity. Required for normal cell-surface expression of SCARB1. Plays a role in maintaining normal plasma cholesterol levels via its effects on SCARB1. Plays a role in the normal localization and function of the chloride-anion exchanger SLC26A6 to the plasma membrane in the brush border of the proximal tubule of the kidney. May be involved in the regulation of proximal tubular Na(+)-dependent inorganic phosphate cotransport therefore playing an important role in tubule function. This chain is Na(+)/H(+) exchange regulatory cofactor NHE-RF3 (PDZK1), found in Pongo abelii (Sumatran orangutan).